The sequence spans 162 residues: Dihydrofolate reductase (162 aa).

A DHFR domain is found at 3-161 (KITIIAACAE…VAYTFVHYLG (159 aa)). Residue 7–9 (IAA) coordinates substrate. Residues 8–9 (AA) and 16–21 (IGAGNA) contribute to the NADP(+) site. Residue aspartate 29 participates in substrate binding. 45–48 (GRKT) provides a ligand contact to NADP(+). Arginine 60 contributes to the substrate binding site. Residues 65–68 (ISRQ) and 98–103 (MGGAQI) each bind NADP(+). Threonine 117 lines the substrate pocket.

Belongs to the dihydrofolate reductase family.

It catalyses the reaction (6S)-5,6,7,8-tetrahydrofolate + NADP(+) = 7,8-dihydrofolate + NADPH + H(+). It participates in cofactor biosynthesis; tetrahydrofolate biosynthesis; 5,6,7,8-tetrahydrofolate from 7,8-dihydrofolate: step 1/1. Key enzyme in folate metabolism. Catalyzes an essential reaction for de novo glycine and purine synthesis, and for DNA precursor synthesis. The protein is Dihydrofolate reductase (folA) of Neisseria gonorrhoeae.